The primary structure comprises 292 residues: Calcium-binding protein CBP (292 aa).

A disordered region spans residues Met1–Pro80. The segment covering Tyr12 to Gly21 has biased composition (gly residues). Positions Ala22–Ala40 are enriched in pro residues. 2 consecutive EF-hand domains span residues Gly121 to Ser156 and Tyr187 to Ser222. Residues Asp134, Asp136, Ser138, Met140, Glu145, Asp200, Asp202, Ser204, Lys206, and Glu211 each coordinate Ca(2+).

Potential calcium sensor. The chain is Calcium-binding protein CBP from Oryza sativa subsp. japonica (Rice).